The sequence spans 419 residues: UDP-N-acetylglucosamine 1-carboxyvinyltransferase (419 aa).

Residue 22 to 23 participates in phosphoenolpyruvate binding; that stretch reads KN. Arginine 93 lines the UDP-N-acetyl-alpha-D-glucosamine pocket. Catalysis depends on cysteine 117, which acts as the Proton donor. A 2-(S-cysteinyl)pyruvic acid O-phosphothioketal modification is found at cysteine 117. The UDP-N-acetyl-alpha-D-glucosamine site is built by aspartate 307 and isoleucine 329.

The protein belongs to the EPSP synthase family. MurA subfamily.

Its subcellular location is the cytoplasm. The catalysed reaction is phosphoenolpyruvate + UDP-N-acetyl-alpha-D-glucosamine = UDP-N-acetyl-3-O-(1-carboxyvinyl)-alpha-D-glucosamine + phosphate. It functions in the pathway cell wall biogenesis; peptidoglycan biosynthesis. Its function is as follows. Cell wall formation. Adds enolpyruvyl to UDP-N-acetylglucosamine. The protein is UDP-N-acetylglucosamine 1-carboxyvinyltransferase of Shewanella denitrificans (strain OS217 / ATCC BAA-1090 / DSM 15013).